The chain runs to 395 residues: Phosphoserine aminotransferase (395 aa).

Threonine 20 is modified (phosphothreonine). 80 to 81 (GT) contacts pyridoxal 5'-phosphate. Serine 112 carries the post-translational modification Phosphoserine. Residues tryptophan 113, threonine 170, aspartate 194, and glutamine 217 each coordinate pyridoxal 5'-phosphate. The residue at position 218 (lysine 218) is an N6-(pyridoxal phosphate)lysine. 271–272 (NT) is a binding site for pyridoxal 5'-phosphate.

It belongs to the class-V pyridoxal-phosphate-dependent aminotransferase family. SerC subfamily. In terms of assembly, homodimer. The cofactor is pyridoxal 5'-phosphate.

The enzyme catalyses O-phospho-L-serine + 2-oxoglutarate = 3-phosphooxypyruvate + L-glutamate. The catalysed reaction is 4-(phosphooxy)-L-threonine + 2-oxoglutarate = (R)-3-hydroxy-2-oxo-4-phosphooxybutanoate + L-glutamate. Its pathway is amino-acid biosynthesis; L-serine biosynthesis; L-serine from 3-phospho-D-glycerate: step 2/3. In terms of biological role, phosphoserine aminotransferase (PSAT) is a pyridoxal 5'-phosphate-dependent enzyme involved in the second step of the phosphorylated pathway of serine biosynthesis. Catalyzes the reversible conversion of 3-phosphohydroxypyruvate to phosphoserine and of 3-hydroxy-2-oxo-4-phosphonooxybutanoate to phosphohydroxythreonine. Plays an indirect role in purine biosynthesis. The chain is Phosphoserine aminotransferase from Saccharomyces cerevisiae (strain ATCC 204508 / S288c) (Baker's yeast).